A 234-amino-acid chain; its full sequence is Large ribosomal subunit protein uL1 (234 aa).

Belongs to the universal ribosomal protein uL1 family. Part of the 50S ribosomal subunit.

Functionally, binds directly to 23S rRNA. The L1 stalk is quite mobile in the ribosome, and is involved in E site tRNA release. Protein L1 is also a translational repressor protein, it controls the translation of the L11 operon by binding to its mRNA. The protein is Large ribosomal subunit protein uL1 of Salmonella agona (strain SL483).